Reading from the N-terminus, the 200-residue chain is High mobility group protein 1 homolog (200 aa).

2 DNA-binding regions (HMG box) span residues 11-81 (PRGR…QSYK) and 100-168 (PKRN…AEYK). Positions 64 to 86 (EKSMRDKVRYDREMQSYKPPKGE) are enriched in basic and acidic residues. 2 disordered regions span residues 64–103 (EKSM…PKRN) and 169–200 (AKAK…DDSD). Positions 190–200 (SSDDSSSDDSD) are enriched in acidic residues.

Belongs to the HMGB family.

The protein resides in the nucleus. It is found in the chromosome. In terms of biological role, binds preferentially single-stranded DNA and unwinds double-stranded DNA. This chain is High mobility group protein 1 homolog (HMG1), found in Strongylocentrotus purpuratus (Purple sea urchin).